A 487-amino-acid chain; its full sequence is Protein DETOXIFICATION 11 (487 aa).

12 helical membrane-spanning segments follow: residues 35-55 (LICF…LQII), 73-93 (FAIS…SCAL), 122-142 (LVCL…VILG), 151-171 (AGRF…LQPL), 184-204 (LLIT…LLVY), 211-231 (IGGA…LGSF), 264-284 (AAML…SGLL), 293-313 (VLSV…AIAA), 330-350 (AAHI…LMVG), 377-397 (MAPL…LSGV), 412-432 (FGAF…WVHL), and 435-455 (VGLW…LALV).

Belongs to the multi antimicrobial extrusion (MATE) (TC 2.A.66.1) family.

The protein localises to the membrane. In Arabidopsis thaliana (Mouse-ear cress), this protein is Protein DETOXIFICATION 11.